The chain runs to 69 residues: Putative F-box protein At2g33705 (69 aa).

The F-box domain occupies 14-59 (GVNLEQIPYDLVLEILLKLSAKSIARFRCVSKLWDSTFRSRYFTEL).

The polypeptide is Putative F-box protein At2g33705 (Arabidopsis thaliana (Mouse-ear cress)).